A 420-amino-acid chain; its full sequence is UDP-glucuronic acid decarboxylase 1 (420 aa).

An N-acetylmethionine modification is found at methionine 1. Over 1–19 (MVSKALLRLVSAVNRRRMK) the chain is Cytoplasmic. Residues 20–40 (LLLGIALLAYVASVWGNFVNM) form a helical; Signal-anchor for type II membrane protein membrane-spanning segment. Residues 41-420 (RSIQENGELK…RIKKGRTRHN (380 aa)) lie on the Lumenal side of the membrane. Phosphothreonine is present on threonine 94. 10 residues coordinate NAD(+): glycine 98, phenylalanine 99, valine 100, aspartate 119, asparagine 120, phenylalanine 122, threonine 123, glycine 124, aspartate 144, and valine 145. UDP-alpha-D-glucuronate is bound by residues leucine 149 and tyrosine 150. The NAD(+) site is built by leucine 159 and serine 161. Residue lysine 177 participates in UDP-alpha-D-glucuronate binding. Position 178 (threonine 178) interacts with NAD(+). Positions 185, 188, 191, and 192 each coordinate UDP-alpha-D-glucuronate. The NAD(+) site is built by alanine 200, tyrosine 231, and lysine 235. The Proton acceptor role is filled by tyrosine 231. UDP-alpha-D-glucuronate-binding residues include tyrosine 245, glutamine 248, and glutamate 249. NAD(+) contacts are provided by threonine 261, histidine 267, and arginine 272. An N-linked (GlcNAc...) asparagine glycan is attached at asparagine 316.

This sequence belongs to the NAD(P)-dependent epimerase/dehydratase family. UDP-glucuronic acid decarboxylase subfamily. In terms of assembly, homodimer and homotetramer. Interacts with AKT1. NAD(+) is required as a cofactor.

Its subcellular location is the golgi apparatus. It localises to the golgi stack membrane. The catalysed reaction is UDP-alpha-D-glucuronate + H(+) = UDP-alpha-D-xylose + CO2. The protein operates within nucleotide-sugar biosynthesis; UDP-alpha-D-xylose biosynthesis; UDP-alpha-D-xylose from UDP-alpha-D-glucuronate: step 1/1. Its function is as follows. Catalyzes the NAD-dependent decarboxylation of UDP-glucuronic acid to UDP-xylose. Necessary for the biosynthesis of the core tetrasaccharide in glycosaminoglycan biosynthesis. This is UDP-glucuronic acid decarboxylase 1 (UXS1) from Pongo abelii (Sumatran orangutan).